Consider the following 316-residue polypeptide: tRNA dimethylallyltransferase (316 aa).

19–26 (GPTASGKT) is a binding site for ATP. 21–26 (TASGKT) contacts substrate. 3 interaction with substrate tRNA regions span residues 44-47 (DSAL), 168-172 (QRITR), and 249-254 (RCVGYR).

The protein belongs to the IPP transferase family. Monomer. Requires Mg(2+) as cofactor.

It carries out the reaction adenosine(37) in tRNA + dimethylallyl diphosphate = N(6)-dimethylallyladenosine(37) in tRNA + diphosphate. Catalyzes the transfer of a dimethylallyl group onto the adenine at position 37 in tRNAs that read codons beginning with uridine, leading to the formation of N6-(dimethylallyl)adenosine (i(6)A). In Colwellia psychrerythraea (strain 34H / ATCC BAA-681) (Vibrio psychroerythus), this protein is tRNA dimethylallyltransferase.